Reading from the N-terminus, the 340-residue chain is Uroporphyrinogen decarboxylase (340 aa).

Substrate-binding positions include 23–27, Asp72, Tyr147, Thr202, and His316; that span reads RQAGR.

Belongs to the uroporphyrinogen decarboxylase family. In terms of assembly, homodimer.

It is found in the cytoplasm. It carries out the reaction uroporphyrinogen III + 4 H(+) = coproporphyrinogen III + 4 CO2. Its pathway is porphyrin-containing compound metabolism; protoporphyrin-IX biosynthesis; coproporphyrinogen-III from 5-aminolevulinate: step 4/4. Catalyzes the decarboxylation of four acetate groups of uroporphyrinogen-III to yield coproporphyrinogen-III. This chain is Uroporphyrinogen decarboxylase, found in Geobacter sulfurreducens (strain ATCC 51573 / DSM 12127 / PCA).